Consider the following 194-residue polypeptide: Probable GTP-binding protein EngB (194 aa).

Residues 22–194 form the EngB-type G domain; that stretch reads DLPEFALAGR…KFWDWIEDKM (173 aa). GTP contacts are provided by residues 30–37, 57–61, 75–78, 142–145, and 175–177; these read GRSNVGKS, GKTQT, DVPG, TKMD, and FSS. Mg(2+) is bound by residues serine 37 and threonine 59.

Belongs to the TRAFAC class TrmE-Era-EngA-EngB-Septin-like GTPase superfamily. EngB GTPase family. It depends on Mg(2+) as a cofactor.

Functionally, necessary for normal cell division and for the maintenance of normal septation. This chain is Probable GTP-binding protein EngB, found in Lactobacillus gasseri (strain ATCC 33323 / DSM 20243 / BCRC 14619 / CIP 102991 / JCM 1131 / KCTC 3163 / NCIMB 11718 / NCTC 13722 / AM63).